We begin with the raw amino-acid sequence, 233 residues long: UPF0758 protein TTE0897 (233 aa).

Residues 108 to 230 (SVTSPEDVIN…GISLKEKGYY (123 aa)) form the MPN domain. 3 residues coordinate Zn(2+): His179, His181, and Asp192. Positions 179–192 (HNHPSGDPTPSRED) match the JAMM motif motif.

It belongs to the UPF0758 family.

This is UPF0758 protein TTE0897 from Caldanaerobacter subterraneus subsp. tengcongensis (strain DSM 15242 / JCM 11007 / NBRC 100824 / MB4) (Thermoanaerobacter tengcongensis).